Reading from the N-terminus, the 234-residue chain is LexA repressor (234 aa).

Residues 1-29 (MSDAANPEGHKRSLPGRPPGIRADSSGLT) form a disordered region. Residues 52–72 (MREIGQAVGLSSTSSVAHQLM) constitute a DNA-binding region (H-T-H motif). The segment at 90 to 109 (YEVRGSDQAASVQPTDTAGK) is disordered. Active-site for autocatalytic cleavage activity residues include serine 158 and lysine 195.

It belongs to the peptidase S24 family. Homodimer.

The catalysed reaction is Hydrolysis of Ala-|-Gly bond in repressor LexA.. In terms of biological role, represses a number of genes involved in the response to DNA damage (SOS response), including recA and lexA. In the presence of single-stranded DNA, RecA interacts with LexA causing an autocatalytic cleavage which disrupts the DNA-binding part of LexA, leading to derepression of the SOS regulon and eventually DNA repair. The chain is LexA repressor from Streptomyces coelicolor (strain ATCC BAA-471 / A3(2) / M145).